A 276-amino-acid polypeptide reads, in one-letter code: MIVIGRSIVHPYITNEYEPFAAEKQQILSIMAGNQEVYSFRTADELSFDLNLRVNIIISALELFQSGFQFRTFQQSFCNPQYWKRTSLGGFELLPNIPPSIAIQDIFKNGKLYGTECATAMIIIFYKALLSLYEEETFNRLFANLLLYTWDYDQDLRLITKTGGDLVPGDLVYFKNPQVNPATIEWQGENTIYLGNFFFYGHGVGVKTKEEIIYSLNERRVPYAFISAFLTDTITRIDSRIMSQYASSSTPQTSISFIPIRDDAIVATVGHTTTIY.

The protein belongs to the bacillus TGase family.

The catalysed reaction is L-glutaminyl-[protein] + L-lysyl-[protein] = [protein]-L-lysyl-N(6)-5-L-glutamyl-[protein] + NH4(+). Its function is as follows. Probably plays a role in the assembly of the spore coat proteins by catalyzing epsilon-(gamma-glutamyl)lysine cross-links. The protein is Protein-glutamine gamma-glutamyltransferase of Bacillus cereus (strain G9842).